The chain runs to 182 residues: MPLGDCNISTPDNKQNRKNQEIRVPRVRVIGSDGEMVGVLSRDEALAKAEEEGLDLVEIQPQADPPVCKIMDFGKFKFEQQKKANEAKKKTKQVEIKELKFRPVTDEGDYQIKLRNMRRFLEEGDKVKVNIRFRGREMSHQELGREMAARIEADLGDDIVIESRPRLEGRQMVMMIAPKKKV.

Positions 1–22 (MPLGDCNISTPDNKQNRKNQEI) are disordered.

It belongs to the IF-3 family. In terms of assembly, monomer.

The protein resides in the cytoplasm. Its function is as follows. IF-3 binds to the 30S ribosomal subunit and shifts the equilibrium between 70S ribosomes and their 50S and 30S subunits in favor of the free subunits, thus enhancing the availability of 30S subunits on which protein synthesis initiation begins. The sequence is that of Translation initiation factor IF-3 from Xanthomonas axonopodis pv. citri (strain 306).